An 854-amino-acid polypeptide reads, in one-letter code: Protein unc-33 (854 aa).

Disordered regions lie at residues 57–114 (ETVS…IPAP), 130–327 (ELFG…DGNG), and 794–854 (VERV…TGFW). Polar residues-rich tracts occupy residues 58-68 (TVSNKSRSSEG) and 75-97 (RPNS…TSAR). Over residues 193–202 (KVLRGEKSTP) the composition is skewed to basic and acidic residues. The segment covering 240–257 (VDDEEEPEAEAQEMEEPQ) has biased composition (acidic residues). Positions 279–298 (HPSEDGDSTRNGETPTDRRN) are enriched in basic and acidic residues. Residues 802 to 811 (SSQQQKPQQN) are compositionally biased toward polar residues. Positions 816–827 (NSGDFDRNRTKV) are enriched in basic and acidic residues.

This sequence belongs to the metallo-dependent hydrolases superfamily. Hydantoinase/dihydropyrimidinase family. As to quaternary structure, isoform a: Probable monomer. Isoform b: Probable homodimer. Isoform c: Probable homodimer. Probable heterodimer composed of isoform b and isoform c. Interacts with unc-14 and kinesin-1 motor complex light chain klc-1; both interactions regulate unc-33 neurite localization. Interacts with fln-1 (via calponin-homology (CH) domains and filamin repeat 18-19). Isoform c: Interacts with vab-8 isoform a. As to expression, expressed in ventral cord and nerve ring (at protein level). Isoform a: Expressed in nerve ring (at protein level). Expressed in the nervous system, two amphid socket cells and weakly in non-neuronal pharyngeal cells.

It is found in the cell projection. The protein resides in the axon. The protein localises to the dendrite. During neurogenesis, plays an essential role in axonal guidance and outgrowth by regulating the polarization of both microtubule and actin cytoskeletons. Establishes the asymmetry of axonal and dendrite microtubules and the polarized sorting of neuronal proteins. This is achieved in part by regulating the localization of kinesin-like protein unc-104. In neurons without a distal microtubule-organizing center (MTOC), also controls the organization of microtubules in dendrites. During the dorso-ventral axonal guidance and outgrowth of VD neurons, required downstream of Rac GTPases ced-10 and mig-2 to inhibit growth cone filopodial protrusion mediated by the unc-6/netrin receptor unc-40-unc-5. Specifically, regulates growth cone filopodial protrusion polarity, and thus migration, by promoting F-actin polarization and by restricting plus-end microtubule accumulation in the growth cone. Probably downstream of mab-20/Sema2a and mab-20 receptor plx-2, regulates the guidance of DD/VD neuron axons by modulating fln-1 interaction with F-actin which results in the remodeling of the actin cytoskeleton. In hermaphrodites, involved in sex myoblast (SM) migration by regulating the gonad-dependent repulsion of SMs. Its function is as follows. In neurons, required for the polarized sorting of axonal proteins. In PLM neuron, regulates innexin unc-9 gap junction turnover by suppressing unc-9 transport out of gap junctions. Plays a role in locomotion and egg-laying. Functionally, in PLM neuron, regulates innexin unc-9 gap junction turnover by suppressing unc-9 transport out of gap junctions. The chain is Protein unc-33 from Caenorhabditis elegans.